Reading from the N-terminus, the 198-residue chain is NAD(P)H dehydrogenase (quinone) (198 aa).

Positions 4–189 constitute a Flavodoxin-like domain; that stretch reads ILVLYYSMYG…SIARYQGEYV (186 aa). Residues 10 to 15 and 78 to 80 contribute to the FMN site; these read SMYGHI and TRF. Tyr-12 contacts NAD(+). Residue Trp-98 participates in substrate binding. Residues 113 to 118 and His-133 each bind FMN; that span reads STGTGG.

The protein belongs to the WrbA family. FMN serves as cofactor.

The catalysed reaction is a quinone + NADH + H(+) = a quinol + NAD(+). The enzyme catalyses a quinone + NADPH + H(+) = a quinol + NADP(+). In Salmonella paratyphi B (strain ATCC BAA-1250 / SPB7), this protein is NAD(P)H dehydrogenase (quinone).